A 428-amino-acid polypeptide reads, in one-letter code: Glutamate-1-semialdehyde 2,1-aminomutase (428 aa).

The residue at position 265 (K265) is an N6-(pyridoxal phosphate)lysine.

The protein belongs to the class-III pyridoxal-phosphate-dependent aminotransferase family. HemL subfamily. Homodimer. Pyridoxal 5'-phosphate is required as a cofactor.

The protein localises to the cytoplasm. The catalysed reaction is (S)-4-amino-5-oxopentanoate = 5-aminolevulinate. It functions in the pathway porphyrin-containing compound metabolism; protoporphyrin-IX biosynthesis; 5-aminolevulinate from L-glutamyl-tRNA(Glu): step 2/2. This Aeromonas hydrophila subsp. hydrophila (strain ATCC 7966 / DSM 30187 / BCRC 13018 / CCUG 14551 / JCM 1027 / KCTC 2358 / NCIMB 9240 / NCTC 8049) protein is Glutamate-1-semialdehyde 2,1-aminomutase.